Reading from the N-terminus, the 165-residue chain is Biosynthetic peptidoglycan transglycosylase (165 aa).

Belongs to the glycosyltransferase 51 family.

Its subcellular location is the cell inner membrane. The enzyme catalyses [GlcNAc-(1-&gt;4)-Mur2Ac(oyl-L-Ala-gamma-D-Glu-L-Lys-D-Ala-D-Ala)](n)-di-trans,octa-cis-undecaprenyl diphosphate + beta-D-GlcNAc-(1-&gt;4)-Mur2Ac(oyl-L-Ala-gamma-D-Glu-L-Lys-D-Ala-D-Ala)-di-trans,octa-cis-undecaprenyl diphosphate = [GlcNAc-(1-&gt;4)-Mur2Ac(oyl-L-Ala-gamma-D-Glu-L-Lys-D-Ala-D-Ala)](n+1)-di-trans,octa-cis-undecaprenyl diphosphate + di-trans,octa-cis-undecaprenyl diphosphate + H(+). Its pathway is cell wall biogenesis; peptidoglycan biosynthesis. Functionally, peptidoglycan polymerase that catalyzes glycan chain elongation from lipid-linked precursors. This is Biosynthetic peptidoglycan transglycosylase from Neisseria meningitidis.